The following is a 413-amino-acid chain: Eukaryotic initiation factor 4A-9 (413 aa).

The short motif at 40 to 68 (HSFDAMGLKENLLRGIYAYGFEKPSAIQQ) is the Q motif element. Residues 71-241 (IVPFCKGLDV…RKFMNKPVRI (171 aa)) enclose the Helicase ATP-binding domain. Residue 84 to 91 (AQSGTGKT) participates in ATP binding. Positions 189-192 (DEAD) match the DEAD box motif. The Helicase C-terminal domain occupies 252–413 (GIKQFYVNVD…ELPANVADLL (162 aa)).

It belongs to the DEAD box helicase family. eIF4A subfamily. As to quaternary structure, eIF4F is a multi-subunit complex, the composition of which varies with external and internal environmental conditions. It is composed of at least EIF4A, EIF4E and EIF4G.

It catalyses the reaction ATP + H2O = ADP + phosphate + H(+). Its function is as follows. ATP-dependent RNA helicase which is a subunit of the eIF4F complex involved in cap recognition and is required for mRNA binding to ribosome. In the current model of translation initiation, eIF4A unwinds RNA secondary structures in the 5'-UTR of mRNAs which is necessary to allow efficient binding of the small ribosomal subunit, and subsequent scanning for the initiator codon. The polypeptide is Eukaryotic initiation factor 4A-9 (Nicotiana tabacum (Common tobacco)).